Consider the following 44-residue polypeptide: Conotoxin Cl9a (44 aa).

Residues glutamate 7, glutamate 8, and glutamate 24 each carry the 4-carboxyglutamate modification. 3 cysteine pairs are disulfide-bonded: cysteine 9–cysteine 33, cysteine 15–cysteine 40, and cysteine 23–cysteine 42.

In terms of tissue distribution, expressed by the venom duct.

It is found in the secreted. This is Conotoxin Cl9a from Californiconus californicus (California cone).